The chain runs to 248 residues: Thiol:disulfide interchange protein DsbG (248 aa).

The signal sequence occupies residues 1–17 (MLKKILLLALLPAIAFA). The cysteines at positions 126 and 129 are disulfide-linked.

The protein belongs to the thioredoxin family. DsbC subfamily. Homodimer. Interacts with ErfK, YbiS and YnhG.

The protein resides in the periplasm. Involved in disulfide bond formation. DsbG and DsbC are part of a periplasmic reducing system that controls the level of cysteine sulfenylation, and provides reducing equivalents to rescue oxidatively damaged secreted proteins such as ErfK, YbiS and YnhG. Probably also functions as a disulfide isomerase with a narrower substrate specificity than DsbC. DsbG is maintained in a reduced state by DsbD. Displays chaperone activity in both redox states in vitro. This Escherichia coli (strain K12) protein is Thiol:disulfide interchange protein DsbG (dsbG).